Reading from the N-terminus, the 115-residue chain is Methylmalonyl-CoA decarboxylase subunit delta (115 aa).

A helical transmembrane segment spans residues 11-31 (WLIMAINMTVVFAVLIALGIL). Residues 46–70 (EAPAATAPVATPTATPVAPANASAQ) are disordered. The span at 48-65 (PAATAPVATPTATPVAPA) shows a compositional bias: low complexity.

The protein belongs to the OadG family. The methylmalonyl-CoA decarboxylase is composed of five subunits: the carboxyltransferase alpha subunit (MmdA), the tunnel beta subunit (MmdB), the biotin-containing gamma subunit (MmdC), and the delta (MmdD) and epsilon (MmdE) subunits. Post-translationally, the N-terminus is blocked.

It localises to the cell membrane. It carries out the reaction (S)-methylmalonyl-CoA + Na(+)(in) + H(+)(out) = propanoyl-CoA + Na(+)(out) + CO2. Completely inhibited by avidin. Subunit of the sodium ion pump methylmalonyl-CoA decarboxylase, which converts the chemical energy of a decarboxylation reaction into an electrochemical gradient of Na(+) ions across the cytoplasmic membrane, thereby creating a sodium ion motive force that is used for ATP synthesis. The delta subunit is required for catalytic activity as well as for the proper assembly of the individual subunits to an enzyme complex. Can also convert malonyl-CoA into acetyl-CoA. In Veillonella parvula (Staphylococcus parvulus), this protein is Methylmalonyl-CoA decarboxylase subunit delta.